The following is a 425-amino-acid chain: uncharacterized protein (425 aa).

To K.pneumoniae SorE.

This is an uncharacterized protein from Escherichia coli (strain K12).